Reading from the N-terminus, the 209-residue chain is Small ribosomal subunit protein uS4 (209 aa).

The disordered stretch occupies residues 22–45 (RGRNPLLRKPNPPGQHGMQRKKKS). The S4 RNA-binding domain occupies 93-154 (CRLDSIVYRL…KSKRLAIVTE (62 aa)).

It belongs to the universal ribosomal protein uS4 family. As to quaternary structure, part of the 30S ribosomal subunit. Contacts protein S5. The interaction surface between S4 and S5 is involved in control of translational fidelity.

Its function is as follows. One of the primary rRNA binding proteins, it binds directly to 16S rRNA where it nucleates assembly of the body of the 30S subunit. In terms of biological role, with S5 and S12 plays an important role in translational accuracy. This chain is Small ribosomal subunit protein uS4, found in Chlamydia trachomatis serovar L2 (strain ATCC VR-902B / DSM 19102 / 434/Bu).